The primary structure comprises 968 residues: Phosphoenolpyruvate carboxylase (968 aa).

Ser11 carries the phosphoserine modification. Residues His172 and Lys602 contribute to the active site.

This sequence belongs to the PEPCase type 1 family. Homotetramer. Mg(2+) serves as cofactor.

Its subcellular location is the cytoplasm. It catalyses the reaction oxaloacetate + phosphate = phosphoenolpyruvate + hydrogencarbonate. With respect to regulation, by light-reversible phosphorylation. Its function is as follows. Through the carboxylation of phosphoenolpyruvate (PEP) it forms oxaloacetate, a four-carbon dicarboxylic acid source for the tricarboxylic acid cycle. The protein is Phosphoenolpyruvate carboxylase of Phaseolus vulgaris (Kidney bean).